A 257-amino-acid polypeptide reads, in one-letter code: Pyridoxal phosphate homeostasis protein (257 aa).

N6-(pyridoxal phosphate)lysine is present on lysine 47.

Belongs to the pyridoxal phosphate-binding protein YggS/PROSC family.

Its function is as follows. Pyridoxal 5'-phosphate (PLP)-binding protein, which is involved in PLP homeostasis. The sequence is that of Pyridoxal phosphate homeostasis protein from Mycobacterium leprae (strain TN).